Reading from the N-terminus, the 431-residue chain is Glutamate-1-semialdehyde 2,1-aminomutase (431 aa).

Residue Lys-269 is modified to N6-(pyridoxal phosphate)lysine.

Belongs to the class-III pyridoxal-phosphate-dependent aminotransferase family. HemL subfamily. As to quaternary structure, homodimer. It depends on pyridoxal 5'-phosphate as a cofactor.

The protein resides in the cytoplasm. The enzyme catalyses (S)-4-amino-5-oxopentanoate = 5-aminolevulinate. Its pathway is porphyrin-containing compound metabolism; protoporphyrin-IX biosynthesis; 5-aminolevulinate from L-glutamyl-tRNA(Glu): step 2/2. The protein operates within porphyrin-containing compound metabolism; chlorophyll biosynthesis. The sequence is that of Glutamate-1-semialdehyde 2,1-aminomutase from Chlorobium phaeobacteroides (strain BS1).